A 139-amino-acid chain; its full sequence is MLQPKRTKYRKPFLQSHDKRKAHKGNKVSFGSHGLQAVTSAWVDSRQIESARIAATRSLGREGNVIIRIFPHFSKTSKPIGVRMGSGKGSPEKWYTPVKVNTVVFEIQGVSAERAKEALRLAGHKLPVKWKIIEKEGVN.

Residues 1 to 11 (MLQPKRTKYRK) show a composition bias toward basic residues. A disordered region spans residues 1-30 (MLQPKRTKYRKPFLQSHDKRKAHKGNKVSF).

This sequence belongs to the universal ribosomal protein uL16 family. As to quaternary structure, part of the 50S ribosomal subunit.

Binds 23S rRNA and is also seen to make contacts with the A and possibly P site tRNAs. The sequence is that of Large ribosomal subunit protein uL16 from Mycoplasmopsis synoviae (strain 53) (Mycoplasma synoviae).